A 129-amino-acid polypeptide reads, in one-letter code: UPF0225 protein XOO0258 (129 aa).

It belongs to the UPF0225 family.

The sequence is that of UPF0225 protein XOO0258 from Xanthomonas oryzae pv. oryzae (strain MAFF 311018).